We begin with the raw amino-acid sequence, 95 residues long: Glutamyl-tRNA(Gln) amidotransferase subunit C (95 aa).

This sequence belongs to the GatC family. As to quaternary structure, heterotrimer of A, B and C subunits.

The enzyme catalyses L-glutamyl-tRNA(Gln) + L-glutamine + ATP + H2O = L-glutaminyl-tRNA(Gln) + L-glutamate + ADP + phosphate + H(+). The catalysed reaction is L-aspartyl-tRNA(Asn) + L-glutamine + ATP + H2O = L-asparaginyl-tRNA(Asn) + L-glutamate + ADP + phosphate + 2 H(+). Allows the formation of correctly charged Asn-tRNA(Asn) or Gln-tRNA(Gln) through the transamidation of misacylated Asp-tRNA(Asn) or Glu-tRNA(Gln) in organisms which lack either or both of asparaginyl-tRNA or glutaminyl-tRNA synthetases. The reaction takes place in the presence of glutamine and ATP through an activated phospho-Asp-tRNA(Asn) or phospho-Glu-tRNA(Gln). The chain is Glutamyl-tRNA(Gln) amidotransferase subunit C from Moraxella catarrhalis (Branhamella catarrhalis).